The following is a 545-amino-acid chain: Chaperonin GroEL (545 aa).

Residues 30–33 (TLGP), Lys51, 87–91 (DGTTT), Gly415, and Asp495 each bind ATP.

This sequence belongs to the chaperonin (HSP60) family. Forms a cylinder of 14 subunits composed of two heptameric rings stacked back-to-back. Interacts with the co-chaperonin GroES.

The protein resides in the cytoplasm. The catalysed reaction is ATP + H2O + a folded polypeptide = ADP + phosphate + an unfolded polypeptide.. Its function is as follows. Together with its co-chaperonin GroES, plays an essential role in assisting protein folding. The GroEL-GroES system forms a nano-cage that allows encapsulation of the non-native substrate proteins and provides a physical environment optimized to promote and accelerate protein folding. The sequence is that of Chaperonin GroEL from Shewanella oneidensis (strain ATCC 700550 / JCM 31522 / CIP 106686 / LMG 19005 / NCIMB 14063 / MR-1).